The sequence spans 229 residues: MLEDLELKDTPIVILNFKTYLESTGERALELASICGDVADETGVNMAVAPQHMDLHRVSDAVEIPVLAQHIDAVDAGGHTGSILAECARDAGAAGTLINHSEKRMQLADIEWVISRMKELEMMSVVCTNNVMTTAAAAALGPDFVAVEPPELIGSGIPVSRAEPEVITGSVDAVKKVNPEVSVLCGAGISTGDDMKAAVDLGAEGVLLASGIILADSPRDALLDLVSKV.

Substrate is bound at residue 16–18; it reads NFK. The active-site Electrophile is His100. The active-site Proton acceptor is the Glu148. Residues Ile153, Gly188, and 209 to 210 each bind substrate; that span reads AS.

This sequence belongs to the triosephosphate isomerase family. In terms of assembly, homotetramer; dimer of dimers.

Its subcellular location is the cytoplasm. The catalysed reaction is D-glyceraldehyde 3-phosphate = dihydroxyacetone phosphate. It participates in carbohydrate biosynthesis; gluconeogenesis. The protein operates within carbohydrate degradation; glycolysis; D-glyceraldehyde 3-phosphate from glycerone phosphate: step 1/1. Its function is as follows. Involved in the gluconeogenesis. Catalyzes stereospecifically the conversion of dihydroxyacetone phosphate (DHAP) to D-glyceraldehyde-3-phosphate (G3P). This is Triosephosphate isomerase from Methanothermobacter thermautotrophicus (strain ATCC 29096 / DSM 1053 / JCM 10044 / NBRC 100330 / Delta H) (Methanobacterium thermoautotrophicum).